Here is a 319-residue protein sequence, read N- to C-terminus: Ribose-phosphate pyrophosphokinase (319 aa).

Residues 41–43 and 100–101 contribute to the ATP site; these read DGE and RQ. Residues His-134 and Asp-176 each coordinate Mg(2+). Lys-199 is an active-site residue. Residues Arg-201, Asp-225, and 229-233 contribute to the D-ribose 5-phosphate site; that span reads DTAGT.

The protein belongs to the ribose-phosphate pyrophosphokinase family. Class I subfamily. As to quaternary structure, homohexamer. The cofactor is Mg(2+).

It is found in the cytoplasm. It catalyses the reaction D-ribose 5-phosphate + ATP = 5-phospho-alpha-D-ribose 1-diphosphate + AMP + H(+). It participates in metabolic intermediate biosynthesis; 5-phospho-alpha-D-ribose 1-diphosphate biosynthesis; 5-phospho-alpha-D-ribose 1-diphosphate from D-ribose 5-phosphate (route I): step 1/1. Its function is as follows. Involved in the biosynthesis of the central metabolite phospho-alpha-D-ribosyl-1-pyrophosphate (PRPP) via the transfer of pyrophosphoryl group from ATP to 1-hydroxyl of ribose-5-phosphate (Rib-5-P). This chain is Ribose-phosphate pyrophosphokinase, found in Clostridium perfringens (strain 13 / Type A).